Reading from the N-terminus, the 253-residue chain is Malonyl-[acyl-carrier protein] O-methyltransferase (253 aa).

It belongs to the methyltransferase superfamily.

It carries out the reaction malonyl-[ACP] + S-adenosyl-L-methionine = malonyl-[ACP] methyl ester + S-adenosyl-L-homocysteine. It functions in the pathway cofactor biosynthesis; biotin biosynthesis. Functionally, converts the free carboxyl group of a malonyl-thioester to its methyl ester by transfer of a methyl group from S-adenosyl-L-methionine (SAM). It allows to synthesize pimeloyl-ACP via the fatty acid synthetic pathway. The polypeptide is Malonyl-[acyl-carrier protein] O-methyltransferase (Pectobacterium atrosepticum (strain SCRI 1043 / ATCC BAA-672) (Erwinia carotovora subsp. atroseptica)).